We begin with the raw amino-acid sequence, 324 residues long: Protoheme IX farnesyltransferase (324 aa).

9 helical membrane-spanning segments follow: residues 31-51, 56-76, 105-125, 126-146, 153-173, 181-201, 214-234, 238-258, and 285-305; these read LILL…SGQV, FLTT…INCI, VFAA…ANLL, SACL…YWLK, IVIG…AVTG, VLFA…AMMI, PVVN…LLLL, LLLV…AIVL, and FSIL…LPWT.

This sequence belongs to the UbiA prenyltransferase family. Protoheme IX farnesyltransferase subfamily.

Its subcellular location is the cell inner membrane. It catalyses the reaction heme b + (2E,6E)-farnesyl diphosphate + H2O = Fe(II)-heme o + diphosphate. It functions in the pathway porphyrin-containing compound metabolism; heme O biosynthesis; heme O from protoheme: step 1/1. In terms of biological role, converts heme B (protoheme IX) to heme O by substitution of the vinyl group on carbon 2 of heme B porphyrin ring with a hydroxyethyl farnesyl side group. This chain is Protoheme IX farnesyltransferase, found in Acaryochloris marina (strain MBIC 11017).